The chain runs to 363 residues: Chorismate synthase (363 aa).

NADP(+) contacts are provided by Arg-48 and Arg-54. FMN is bound by residues 125 to 127 (RSS), 237 to 238 (NA), Gly-277, 292 to 296 (KPTSS), and Arg-318.

Belongs to the chorismate synthase family. Homotetramer. The cofactor is FMNH2.

It catalyses the reaction 5-O-(1-carboxyvinyl)-3-phosphoshikimate = chorismate + phosphate. It functions in the pathway metabolic intermediate biosynthesis; chorismate biosynthesis; chorismate from D-erythrose 4-phosphate and phosphoenolpyruvate: step 7/7. Its function is as follows. Catalyzes the anti-1,4-elimination of the C-3 phosphate and the C-6 proR hydrogen from 5-enolpyruvylshikimate-3-phosphate (EPSP) to yield chorismate, which is the branch point compound that serves as the starting substrate for the three terminal pathways of aromatic amino acid biosynthesis. This reaction introduces a second double bond into the aromatic ring system. This chain is Chorismate synthase, found in Pseudomonas fluorescens (strain Pf0-1).